Here is a 477-residue protein sequence, read N- to C-terminus: MSPQTETKASVGFKAGVKEYKLTYYTPEYQTKDTDILAAFRVTPQPGVPPEEAGAAVAAESSTGTWTTVWTDGLTSLDRYKGRCYRIERVVGEKDQYIAYVAYPLDLFEEGSVTNMFTSIVGNVFGFKALRALRLEDLRIPPAYVKTFQGPPHGIQVERDKLNKYGRPLLGCTIKPKLGLSAKNYGRAVYECLRGGLDFTKDDENVNSQPFMRWRDRFLFCAEALYKAQAETGEIKGHYLNATAGTCEEMIKRAVFARELGVPIVMHDYLTGGFTANTSLAHYCRDNGLLLHIHRAMHAVIDRQKNHGIHFRVLAKALRMSGGDHIHSGTVVGKLEGERDITLGFVDLLRDDFVEQDRSRGIYFTQDWVSLPGVLPVASGGIHVWHMPALTEIFGDDSVLQFGGGTLGHPWGNPPGAVANRVALEACVKARNEGRDLAQEGNEIIREACKWSPELAAACEVWKEIVFNFAAVDVLDK.

The propeptide occupies 1–2; that stretch reads MS. P3 carries the N-acetylproline modification. At K14 the chain carries N6,N6,N6-trimethyllysine. Substrate contacts are provided by N123 and T173. K175 serves as the catalytic Proton acceptor. A substrate-binding site is contributed by K177. K201, D203, and E204 together coordinate Mg(2+). K201 is modified (N6-carboxylysine). Catalysis depends on H294, which acts as the Proton acceptor. Residues R295, H327, and S379 each contribute to the substrate site.

This sequence belongs to the RuBisCO large chain family. Type I subfamily. In terms of assembly, heterohexadecamer of 8 large chains and 8 small chains; disulfide-linked. The disulfide link is formed within the large subunit homodimers. Mg(2+) is required as a cofactor. The disulfide bond which can form in the large chain dimeric partners within the hexadecamer appears to be associated with oxidative stress and protein turnover.

The protein localises to the plastid. The protein resides in the chloroplast. The enzyme catalyses 2 (2R)-3-phosphoglycerate + 2 H(+) = D-ribulose 1,5-bisphosphate + CO2 + H2O. The catalysed reaction is D-ribulose 1,5-bisphosphate + O2 = 2-phosphoglycolate + (2R)-3-phosphoglycerate + 2 H(+). Functionally, ruBisCO catalyzes two reactions: the carboxylation of D-ribulose 1,5-bisphosphate, the primary event in carbon dioxide fixation, as well as the oxidative fragmentation of the pentose substrate in the photorespiration process. Both reactions occur simultaneously and in competition at the same active site. This is Ribulose bisphosphate carboxylase large chain from Atropa belladonna (Belladonna).